A 53-amino-acid chain; its full sequence is Antilisterial bacteriocin subtilosin biosynthesis protein AlbB (53 aa).

A run of 2 helical transmembrane segments spans residues 8-28 (ILLYILSFIFVIGAVVYFVKS) and 30-50 (YLFTLIFIAIAILFGMRARKA).

It localises to the cell membrane. Involved in the production of the bacteriocin subtilosin. Required for maximal production and for optimal immunity to subtilosin. In Bacillus subtilis (strain 168), this protein is Antilisterial bacteriocin subtilosin biosynthesis protein AlbB (albB).